We begin with the raw amino-acid sequence, 224 residues long: MCGRFTLFSEFDDIIEQFNIDQFLPEGEYHPSYNVAPSQNILTIINDGSNNRLGKLRWGLIPPWAKDEKIGYKMINARAETLSEKPSFRKPLVSKRCIIPADSFYEWKRLDPKTKIPMRIKLKSSNLFAFAGLYEKWNTPEGNPLYTCTIITTKPNELMEDIHDRMPVILTDENEKEWLNPKNTDPDYLQSLLQPYDADDMEAYQVSSLVNSPKNNSPELIESH.

Cys2 acts as the Nucleophile in catalysis. Thiazolidine linkage to a ring-opened DNA abasic site is present on Cys2. Glu106 is a catalytic residue.

Belongs to the SOS response-associated peptidase family.

Its activity is regulated as follows. Formation and reversal of DNA-protein cross-link depends on DNA context. Catalyzes formation of the thiazolidine linkage in presence of abasic sites in single-stranded DNA. Mediates the reversal of the thiazolidine cross-link in presence of double stranded DNA. Its function is as follows. Sensor of abasic sites in single-stranded DNA (ssDNA) required to preserve genome integrity by promoting error-free repair of abasic sites. Recognizes and binds abasic sites in ssDNA at replication forks and chemically modifies the lesion by forming a covalent cross-link with DNA: forms a stable thiazolidine linkage between a ring-opened abasic site and the alpha-amino and sulfhydryl substituents of its N-terminal catalytic cysteine residue. The DNA-protein cross-link is then reversed: able to catalyze the reversal of the thiazolidine cross-link and cycle between a cross-link and a non-cross-linked state depending on DNA context: mediates self-reversal of the thiazolidine cross-link in double stranded DNA. May act as a protease: mediates autocatalytic processing of its N-terminal methionine in order to expose the catalytic cysteine. The protein is Abasic site processing protein YoqW (yoqW) of Bacillus subtilis (strain 168).